We begin with the raw amino-acid sequence, 204 residues long: Somatotropin (204 aa).

The N-terminal stretch at 1–17 is a signal peptide; that stretch reads MERAVLLLSLLSLGVSS. Gln18 carries the pyrrolidone carboxylic acid modification. Zn(2+) is bound at residue His36. A disulfide bond links Cys69 and Cys177. Position 186 (Glu186) interacts with Zn(2+). A disulfide bond links Cys194 and Cys202.

The protein belongs to the somatotropin/prolactin family.

It is found in the secreted. Growth hormone plays an important role in growth control and involved in the regulation of several anabolic processes. In Perca flavescens (American yellow perch), this protein is Somatotropin (gh).